We begin with the raw amino-acid sequence, 285 residues long: Ribosomal RNA small subunit methyltransferase A (285 aa).

S-adenosyl-L-methionine contacts are provided by H27, L29, G54, E75, D100, and N120.

This sequence belongs to the class I-like SAM-binding methyltransferase superfamily. rRNA adenine N(6)-methyltransferase family. RsmA subfamily.

The protein resides in the cytoplasm. The enzyme catalyses adenosine(1518)/adenosine(1519) in 16S rRNA + 4 S-adenosyl-L-methionine = N(6)-dimethyladenosine(1518)/N(6)-dimethyladenosine(1519) in 16S rRNA + 4 S-adenosyl-L-homocysteine + 4 H(+). Functionally, specifically dimethylates two adjacent adenosines (A1518 and A1519) in the loop of a conserved hairpin near the 3'-end of 16S rRNA in the 30S particle. May play a critical role in biogenesis of 30S subunits. This Phenylobacterium zucineum (strain HLK1) protein is Ribosomal RNA small subunit methyltransferase A.